Consider the following 431-residue polypeptide: D-tagatose-1,6-bisphosphate aldolase subunit KbaZ (431 aa).

Belongs to the GatZ/KbaZ family. KbaZ subfamily. In terms of assembly, forms a complex with KbaY.

Its pathway is carbohydrate metabolism; D-tagatose 6-phosphate degradation; D-glyceraldehyde 3-phosphate and glycerone phosphate from D-tagatose 6-phosphate: step 2/2. Component of the tagatose-1,6-bisphosphate aldolase KbaYZ that is required for full activity and stability of the Y subunit. Could have a chaperone-like function for the proper and stable folding of KbaY. When expressed alone, KbaZ does not show any aldolase activity. This is D-tagatose-1,6-bisphosphate aldolase subunit KbaZ from Salmonella arizonae (strain ATCC BAA-731 / CDC346-86 / RSK2980).